We begin with the raw amino-acid sequence, 212 residues long: Shuttling pre-60S factor ECM1 (212 aa).

Disordered stretches follow at residues 28-48 (KISKNSRAARQSDALEPEVKD) and 188-212 (SLAEDNTVQKTPTNRFGVLPDDVEE). Serine 188 carries the post-translational modification Phosphoserine. The segment covering 191-201 (EDNTVQKTPTN) has biased composition (polar residues).

The protein belongs to the ECM1 family. In terms of assembly, associates with the pre-60S ribosomal particle and the nucleopore complex.

Its subcellular location is the nucleus. The protein resides in the nucleolus. The protein localises to the cytoplasm. Pre-ribosomal factor involved in 60S ribosomal protein subunit export from the nucleus. The sequence is that of Shuttling pre-60S factor ECM1 (ECM1) from Saccharomyces cerevisiae (strain ATCC 204508 / S288c) (Baker's yeast).